Reading from the N-terminus, the 346-residue chain is D-erythrose-4-phosphate dehydrogenase (346 aa).

11-12 (RI) contributes to the NAD(+) binding site. Substrate-binding positions include 163–165 (SCT), Arg209, 222–223 (TK), and Arg245. The Nucleophile role is filled by Cys164. Asn327 contributes to the NAD(+) binding site.

This sequence belongs to the glyceraldehyde-3-phosphate dehydrogenase family. Epd subfamily. As to quaternary structure, homotetramer.

It is found in the cytoplasm. It carries out the reaction D-erythrose 4-phosphate + NAD(+) + H2O = 4-phospho-D-erythronate + NADH + 2 H(+). The protein operates within cofactor biosynthesis; pyridoxine 5'-phosphate biosynthesis; pyridoxine 5'-phosphate from D-erythrose 4-phosphate: step 1/5. Its function is as follows. Catalyzes the NAD-dependent conversion of D-erythrose 4-phosphate to 4-phosphoerythronate. This is D-erythrose-4-phosphate dehydrogenase from Vibrio vulnificus (strain YJ016).